Here is a 423-residue protein sequence, read N- to C-terminus: Endoplasmic reticulum junction formation protein lunapark (423 aa).

At 1–45 (MGALLAKWRAKPSTVEVLEKMEKDIQSLEEFRDKNQKLRKIWVAR) the chain is on the cytoplasmic side. Positions 16–40 (EVLEKMEKDIQSLEEFRDKNQKLRK) form a coiled coil. The chain crosses the membrane as a helical span at residues 46-66 (LFFYSTILYILTSLTVYLWYL). Residues 67–77 (PDGMTARLLTM) lie on the Lumenal side of the membrane. Residues 78–98 (LLFLSFPVLIWFVRTLLILWF) traverse the membrane as a helical segment. Over 99–423 (SRRTERNNDA…ETEESFMETE (325 aa)) the chain is Cytoplasmic. The stretch at 101-128 (RTERNNDALELLKTEKKKILEEVMEKET) forms a coiled coil. Residues 147 to 169 (KELELPVPGPPITPRPGQDLRQR) form a disordered region. Thr-159 carries the phosphothreonine modification. 3 positions are modified to phosphoserine: Ser-177, Ser-179, and Ser-188. Thr-198 is modified (phosphothreonine). A disordered region spans residues 200 to 247 (SLQRDTSAPGGPPERSVQPTPQSNILQRRPGSPATTVSGMAIHPPGPP). 2 positions are modified to phosphoserine: Ser-206 and Ser-215. Over residues 216–225 (VQPTPQSNIL) the composition is skewed to polar residues. Position 219 is a phosphothreonine (Thr-219). Phosphoserine occurs at positions 222 and 231. A C4-type; plays a role in ER morphology zinc finger spans residues 280–305 (CQQCFSHNGMALKEEFEYVAFRCAYC). Residues 318–423 (APRLQEINFD…ETEESFMETE (106 aa)) are disordered. The span at 334-343 (DSQGSVSSVQ) shows a compositional bias: polar residues. Acidic residues-rich tracts occupy residues 370–391 (QAIE…DDSE) and 414–423 (ETEESFMETE).

It belongs to the lunapark family. In terms of assembly, homodimer; homodimerization requires the C4-type zinc finger motif and decreases during mitosis in a phosphorylation-dependent manner. Phosphorylated. Phosphorylation at Thr-159 occurs during interphase. Phosphorylation at Ser-177, Ser-179, Ser-188, Thr-198, Ser-206, Ser-215, Thr-219, Ser-222 and Ser-231 occurs during mitosis; these phosphorylations reduce both its homodimerization and the ER three-way tubular junction formation.

Its subcellular location is the endoplasmic reticulum membrane. Its function is as follows. Endoplasmic reticulum (ER)-shaping membrane protein that plays a role in determining ER morphology. Involved in the stabilization of nascent three-way ER tubular junctions within the ER network. May also play a role as a curvature-stabilizing protein within three-way ER tubular junction network. The chain is Endoplasmic reticulum junction formation protein lunapark (lnpk) from Xenopus tropicalis (Western clawed frog).